Consider the following 891-residue polypeptide: Shieldin complex subunit 2 (891 aa).

The sufficient for interaction with SHLD3 and MAD2L2 stretch occupies residues 1–61 (MSQGSQVHIF…AGDQEFKNLE (61 aa)). Residues 1-542 (MSQGSQVHIF…TYVSTKHSYL (542 aa)) form an interaction with ASTE1 region. 3 disordered regions span residues 184-222 (MSTG…KASD), 260-294 (NMEA…NEQS), and 333-357 (NEEN…WSCK). The span at 192-222 (PTGHRERQSQESFSDTRCEPQSEGAVRKASD) shows a compositional bias: basic and acidic residues. Polar residues-rich tracts occupy residues 260 to 271 (NMEAEPTGSQGV) and 342 to 354 (LCSS…NRSW). Positions 695 to 866 (KYSGVVLIKA…QQDFSLLDFC (172 aa)) are mediates interaction with SHLD1.

It belongs to the SHLD2 family. In terms of assembly, component of the shieldin complex, consisting of SHLD1, SHLD2, SHLD3 and MAD2L2/REV7. Within the complex, SHLD2 forms a scaffold which interacts with a SHLD3-MAD2L2 subcomplex via its N-terminus, and with SHLD1 via its C-terminus. Interacts with TP53BP1. Interacts with RIF1. Interacts with ASTE1.

It localises to the chromosome. Functionally, component of the shieldin complex, which plays an important role in repair of DNA double-stranded breaks (DSBs). During G1 and S phase of the cell cycle, the complex functions downstream of TP53BP1 to promote non-homologous end joining (NHEJ) and suppress DNA end resection. Mediates various NHEJ-dependent processes including immunoglobulin class-switch recombination, and fusion of unprotected telomeres. The chain is Shieldin complex subunit 2 from Mus musculus (Mouse).